The following is a 470-amino-acid chain: Dendritic cell-specific transmembrane protein (470 aa).

At 1–34 the chain is on the cytoplasmic side; that stretch reads MGIWTSGTDIFLSLWEIYVSPRSPGWMDFIQHLG. The helical transmembrane segment at 35-55 threads the bilayer; that stretch reads VCCLVALISVGLLSVAACWFL. Residues 56 to 57 lie on the Extracellular side of the membrane; that stretch reads PS. The chain crosses the membrane as a helical span at residues 58–78; that stretch reads IIAAAASWIITCVLLCCSKHA. The Cytoplasmic portion of the chain corresponds to 79–97; that stretch reads RCFILLVFLSCGLREGRNA. A helical transmembrane segment spans residues 98 to 118; that stretch reads LIAAGTGIVILGHVENIFHNF. Residues 119 to 209 are Extracellular-facing; it reads KGLLDGMTCN…MATTTEVLSS (91 aa). Residues 210–230 form a helical membrane-spanning segment; it reads LGQKLLAFAGLSLVLLGTGLF. The Cytoplasmic portion of the chain corresponds to 231 to 292; the sequence is MKRFLGPCGW…FWPTPKERKN (62 aa). A helical transmembrane segment spans residues 293–313; that stretch reads LGLFFLPILIHLCIWVLFAAV. Residues 314–376 are Extracellular-facing; it reads DYLLYRLIFS…PKPKFLLSET (63 aa). The chain crosses the membrane as a helical span at residues 377 to 397; it reads WVPLSVILLILVMLGLLSSIL. Residues 398 to 470 are Cytoplasmic-facing; it reads MQLKILVSAS…QMDMASADKS (73 aa).

Monomer. Homodimer. Isoform 1 interacts (via the C-terminus cytoplasmic tail) with OS9 isoform 1 (via the C-terminus tail); the interaction induces DCSTAMP redistribution to the endoplasmic reticulum-Golgi intermediate compartment. Isoform 1 interacts (via the C-terminus cytoplasmic tail) with OS9 isoform 2 (via the C-terminus tail). Interacts with CREB3. Post-translationally, glycosylated. As to expression, preferentially expressed by dendritic cells (DCs). Detected in both immature and mature DCs. Highly expressed in lymph nodes, lung, kidney and liver. Expressed at lower levels in pancreas, bone marrow, spleen, leukocytes, in freshly isolated peripheral blood mononuclear cells (PBMC) and B-cells. Not expressed in freshly isolated monocytes.

The protein resides in the cell membrane. It is found in the endoplasmic reticulum membrane. Its subcellular location is the endoplasmic reticulum-Golgi intermediate compartment membrane. It localises to the endosome. Probable cell surface receptor that plays several roles in cellular fusion, cell differentiation, bone and immune homeostasis. Plays a role in TNFSF11-mediated osteoclastogenesis. Cooperates with OCSTAMP in modulating cell-cell fusion in both osteoclasts and foreign body giant cells (FBGCs). Participates in osteoclast bone resorption. Involved in inducing the expression of tartrate-resistant acid phosphatase in osteoclast precursors. Plays a role in haematopoietic stem cell differentiation of bone marrow cells toward the myeloid lineage. Inhibits the development of neutrophilic granulocytes. Plays also a role in the regulation of dendritic cell (DC) antigen presentation activity by controlling phagocytic activity. Involved in the maintenance of immune self-tolerance and avoidance of autoimmune reactions. This Homo sapiens (Human) protein is Dendritic cell-specific transmembrane protein (DCSTAMP).